Here is a 489-residue protein sequence, read N- to C-terminus: MESISMMGSPKSLETFLPNGINGIKDARQVTVGVIGSGDFAKSLTIRLIRCGYHVVIGSRNPKFASEFFPHVVDVTHHEDALTKTNIIFVAIHREHYTSLWDLRHLLVGKILIDVSNNMRVNQYPESNAEYLASLFPDSLIVKGFNVISAWALQLGPKDASRQVYICSNNIQARQQVIELARQLNFIPVDLGSLSSAKEIENLPLRLFTLWRGPVVVAISLATFFFLYSFVRDVIHPYARNQQSDFYKIPIEIVNKTLPIVAITLLSLVYLAGLLAAAYQLYYGTKYRRFPPWLDTWLQCRKQLGLLSFFFAVVHVAYSLCLPMRRSERYLFLNMAYQQVHANIENAWNEEEVWRIEMYISFGIMSLGLLSLLAVTSIPSVSNALNWREFSFIQSTLGYVALLITTFHVLIYGWKRAFAEEYYRFYTPPNFVLALVLPSIVILGKMILLLPCISRKLKRIKKGWEKSQFLDEGMGGAVPHLSPERVTVM.

Residues 37–40 (SGDF), 59–60 (SR), 92–99 (IHREHYTS), Asn-117, and Ala-150 each bind NADP(+). 2 residues coordinate FAD: Trp-151 and Asp-159. A helical membrane pass occupies residues 207–227 (LFTLWRGPVVVAISLATFFFL). A Fe(3+)-binding site is contributed by Tyr-228. The chain crosses the membrane as a helical span at residues 258-278 (LPIVAITLLSLVYLAGLLAAA). Residues 258 to 406 (LPIVAITLLS…LGYVALLITT (149 aa)) enclose the Ferric oxidoreductase domain. FAD contacts are provided by Gln-280 and Arg-301. 4 helical membrane passes run 304–324 (LGLLSFFFAVVHVAYSLCLPM), 358–378 (MYISFGIMSLGLLSLLAVTSI), 392–412 (FIQSTLGYVALLITTFHVLIY), and 431–451 (FVLALVLPSIVILGKMILLLP). His-315 contacts heme b. Tyr-318 contributes to the Fe(3+) binding site. The FAD site is built by Ser-377 and Gln-394. Residue His-408 participates in heme b binding. Ser-482 is modified (phosphoserine).

This sequence belongs to the STEAP family. Requires FAD as cofactor. Heme b is required as a cofactor.

It is found in the cell membrane. It localises to the endosome membrane. The catalysed reaction is 2 Fe(2+) + NADP(+) + H(+) = 2 Fe(3+) + NADPH. It carries out the reaction 2 Cu(+) + NADP(+) + H(+) = 2 Cu(2+) + NADPH. Functionally, integral membrane protein that functions as a NADPH-dependent ferric-chelate reductase, using NADPH from one side of the membrane to reduce a Fe(3+) chelate that is bound on the other side of the membrane. Mediates sequential transmembrane electron transfer from NADPH to FAD and onto heme, and finally to the Fe(3+) chelate. Can also reduce Cu(2+) to Cu(1+). In Mus musculus (Mouse), this protein is Metalloreductase STEAP2 (Steap2).